A 403-amino-acid chain; its full sequence is ESX-5 secretion system protein EccE5 (403 aa).

2 consecutive transmembrane segments (helical) span residues 9 to 29 (LALS…ILIV) and 43 to 63 (IAWW…VVTY).

This sequence belongs to the EccE family. Part of the ESX-5 / type VII secretion system (T7SS), which is composed of cytosolic and membrane components. The ESX-5 membrane complex is composed of EccB5, EccC5, EccD5 and EccE5.

It is found in the cell inner membrane. Functionally, part of the ESX-5 specialized secretion system, which is responsible for the secretion of EsxN and a number of PE_PGRS and PPE proteins. This Mycobacterium marinum (strain ATCC BAA-535 / M) protein is ESX-5 secretion system protein EccE5.